The primary structure comprises 148 residues: Multiprotein-bridging factor 1c (148 aa).

The region spanning 91-145 (IQKARLEKKMSQADLAKQINERTQVVQEYENGKAVPNQAVLAKMEKVLGVKLRGK) is the HTH cro/C1-type domain. The H-T-H motif DNA-binding region spans 102–121 (QADLAKQINERTQVVQEYEN).

Belongs to the MBF1 family. In terms of assembly, binds to TPS5. As to expression, expressed in leaves, roots, stems, flowers, siliques and shoots. Not detected in seeds.

It is found in the nucleus. It localises to the nucleolus. The protein resides in the cytoplasm. Functionally, transcriptional coactivator that stimulates transcriptional activity by bridging regulatory proteins and TBP, thereby recruiting TBP to promoters occupied by DNA-binding regulators. Involved in the tolerance to heat and osmotic stress by partially activating the ethylene-response signal transduction pathway. The protein is Multiprotein-bridging factor 1c (MBF1C) of Arabidopsis thaliana (Mouse-ear cress).